Consider the following 373-residue polypeptide: Dual-specificity RNA methyltransferase RlmN (373 aa).

Glu94 acts as the Proton acceptor in catalysis. The region spanning Glu100–Asp339 is the Radical SAM core domain. A disulfide bridge connects residues Cys107 and Cys344. Residues Cys114, Cys118, and Cys121 each coordinate [4Fe-4S] cluster. S-adenosyl-L-methionine-binding positions include Gly168 to Glu169, Ser200, Ser222 to His224, and Asn301. Residue Cys344 is the S-methylcysteine intermediate of the active site.

It belongs to the radical SAM superfamily. RlmN family. The cofactor is [4Fe-4S] cluster.

Its subcellular location is the cytoplasm. It carries out the reaction adenosine(2503) in 23S rRNA + 2 reduced [2Fe-2S]-[ferredoxin] + 2 S-adenosyl-L-methionine = 2-methyladenosine(2503) in 23S rRNA + 5'-deoxyadenosine + L-methionine + 2 oxidized [2Fe-2S]-[ferredoxin] + S-adenosyl-L-homocysteine. It catalyses the reaction adenosine(37) in tRNA + 2 reduced [2Fe-2S]-[ferredoxin] + 2 S-adenosyl-L-methionine = 2-methyladenosine(37) in tRNA + 5'-deoxyadenosine + L-methionine + 2 oxidized [2Fe-2S]-[ferredoxin] + S-adenosyl-L-homocysteine. In terms of biological role, specifically methylates position 2 of adenine 2503 in 23S rRNA and position 2 of adenine 37 in tRNAs. m2A2503 modification seems to play a crucial role in the proofreading step occurring at the peptidyl transferase center and thus would serve to optimize ribosomal fidelity. The protein is Dual-specificity RNA methyltransferase RlmN of Shewanella sediminis (strain HAW-EB3).